The chain runs to 383 residues: 1-deoxy-D-xylulose 5-phosphate reductoisomerase (383 aa).

The NADPH site is built by T10, G11, S12, I13, N38, and N121. K122 is a 1-deoxy-D-xylulose 5-phosphate binding site. Residue E123 participates in NADPH binding. Residue D147 participates in Mn(2+) binding. 1-deoxy-D-xylulose 5-phosphate is bound by residues S148, E149, S172, and H195. E149 serves as a coordination point for Mn(2+). Position 201 (G201) interacts with NADPH. Residues S208, N213, K214, and E217 each coordinate 1-deoxy-D-xylulose 5-phosphate. Residue E217 coordinates Mn(2+).

The protein belongs to the DXR family. Mg(2+) is required as a cofactor. Requires Mn(2+) as cofactor.

It catalyses the reaction 2-C-methyl-D-erythritol 4-phosphate + NADP(+) = 1-deoxy-D-xylulose 5-phosphate + NADPH + H(+). It functions in the pathway isoprenoid biosynthesis; isopentenyl diphosphate biosynthesis via DXP pathway; isopentenyl diphosphate from 1-deoxy-D-xylulose 5-phosphate: step 1/6. Functionally, catalyzes the NADPH-dependent rearrangement and reduction of 1-deoxy-D-xylulose-5-phosphate (DXP) to 2-C-methyl-D-erythritol 4-phosphate (MEP). This chain is 1-deoxy-D-xylulose 5-phosphate reductoisomerase, found in Vesicomyosocius okutanii subsp. Calyptogena okutanii (strain HA).